Consider the following 2241-residue polypeptide: Large tegument protein deneddylase (2241 aa).

The tract at residues 1–238 (MKVTQASCHQ…IDLTGVVRES (238 aa)) is deubiquitination activity. One can recognise a Peptidase C76 domain in the interval 4-226 (TQASCHQGDI…AARLVSTYRD (223 aa)). Catalysis depends on residues C24, D160, and H162. Residues 239–314 (ADTAATTTTA…STTSKTLATA (76 aa)) form a disordered region. The segment covering 240-250 (DTAATTTTAAP) has biased composition (low complexity). Pro residues predominate over residues 251–268 (SLPPLPDPIVDPGCPPGV). The segment covering 304 to 314 (PSTTSKTLATA) has biased composition (low complexity). The segment at 327–331 (SSAVP) is interaction with inner tegument protein. The segment at 1170–1229 (RSSQQKMEEQLQETRQQMTETSERLDRSLRQDPGSSSVTRVPEKPFKGQELAGRITPPPA) is disordered. Positions 1190 to 1199 (TSERLDRSLR) are enriched in basic and acidic residues.

It belongs to the herpesviridae large tegument protein family. In terms of assembly, interacts with host CUL1 and CUL4A; these interactions inhibit the E3 ligase activity of cullins. Interacts with inner tegument protein. Interacts with capsid vertex specific component CVC2. Interacts with the major capsid protein/MCP.

The protein resides in the virion tegument. The protein localises to the host cytoplasm. Its subcellular location is the host nucleus. The catalysed reaction is Thiol-dependent hydrolysis of ester, thioester, amide, peptide and isopeptide bonds formed by the C-terminal Gly of ubiquitin (a 76-residue protein attached to proteins as an intracellular targeting signal).. Functionally, large tegument protein that plays multiple roles in the viral cycle. During viral entry, remains associated with the capsid while most of the tegument is detached and participates in the capsid transport toward the host nucleus. Plays a role in the routing of the capsid at the nuclear pore complex and subsequent uncoating. Within the host nucleus, acts as a deneddylase and promotes the degradation of nuclear CRLs (cullin-RING ubiquitin ligases) and thereby stabilizes nuclear CRL substrates, while cytoplasmic CRLs remain unaffected. These modifications prevent host cell cycle S-phase progression and create a favorable environment allowing efficient viral genome replication. Participates later in the secondary envelopment of capsids. Indeed, plays a linker role for the association of the outer viral tegument to the capsids together with the inner tegument protein. In Human cytomegalovirus (strain AD169) (HHV-5), this protein is Large tegument protein deneddylase (UL48).